We begin with the raw amino-acid sequence, 215 residues long: Cytochrome c biogenesis ATP-binding export protein CcmA (215 aa).

Residues 3–211 (LTAEILAARR…KMTGFAGVDN (209 aa)) form the ABC transporter domain. 35–42 (GKNGSGKS) lines the ATP pocket.

The protein belongs to the ABC transporter superfamily. CcmA exporter (TC 3.A.1.107) family. In terms of assembly, the complex is composed of two ATP-binding proteins (CcmA) and two transmembrane proteins (CcmB).

The protein localises to the cell inner membrane. The catalysed reaction is heme b(in) + ATP + H2O = heme b(out) + ADP + phosphate + H(+). In terms of biological role, part of the ABC transporter complex CcmAB involved in the biogenesis of c-type cytochromes; once thought to export heme, this seems not to be the case, but its exact role is uncertain. Responsible for energy coupling to the transport system. The chain is Cytochrome c biogenesis ATP-binding export protein CcmA from Rhizobium johnstonii (strain DSM 114642 / LMG 32736 / 3841) (Rhizobium leguminosarum bv. viciae).